Consider the following 457-residue polypeptide: Flavin-containing monooxygenase FMO GS-OX2 (457 aa).

Residue 17–22 coordinates FAD; that stretch reads GAGAAG. Residue 211-216 participates in NADP(+) binding; it reads GNFASG.

It belongs to the FMO family.

The catalysed reaction is a (Z)-omega-(methylsulfanyl)-N-sulfo-alkylhydroximate S-glucoside + NADPH + O2 + H(+) = a (Z)-omega-(methylsulfinyl)-alkyl-glucosinolate + NADP(+) + H2O. Its function is as follows. Catalyzes the conversion of methylthioalkyl glucosinolates of any chain length into methylsulfinylalkyl glucosinolates. In Arabidopsis thaliana (Mouse-ear cress), this protein is Flavin-containing monooxygenase FMO GS-OX2 (FMOGS-OX2).